The primary structure comprises 139 residues: D-ribose pyranase (139 aa).

The Proton donor role is filled by His-20. Substrate-binding positions include Asp-28, His-106, and 128-130; that span reads YAN.

The protein belongs to the RbsD / FucU family. RbsD subfamily. As to quaternary structure, homodecamer.

Its subcellular location is the cytoplasm. It catalyses the reaction beta-D-ribopyranose = beta-D-ribofuranose. The protein operates within carbohydrate metabolism; D-ribose degradation; D-ribose 5-phosphate from beta-D-ribopyranose: step 1/2. Functionally, catalyzes the interconversion of beta-pyran and beta-furan forms of D-ribose. The protein is D-ribose pyranase of Enterobacter sp. (strain 638).